The chain runs to 366 residues: Probable glucuronokinase 2 (366 aa).

126–136 (PRQTGLSGSSA) is an ATP binding site. The active-site Proton acceptor is the Asp-179.

It belongs to the GHMP kinase family. Mg(2+) serves as cofactor. The cofactor is Mn(2+). It depends on Co(2+) as a cofactor.

The enzyme catalyses D-glucuronate + ATP = 1-phospho-alpha-D-glucuronate + ADP + H(+). Its function is as follows. Sugar-1-kinase with a strict substrate specificity for D-glucuronic acid and ATP. Involved in the biosynthesis of UDP-glucuronic acid (UDP-GlcA), providing nucleotide sugars for cell-wall polymers. May be also involved in a salvage pathway for glucuronic acid. The chain is Probable glucuronokinase 2 (GLCAK2) from Arabidopsis thaliana (Mouse-ear cress).